The chain runs to 254 residues: tRNA uridine(34) hydroxylase (254 aa).

A Rhodanese domain is found at 123–217 (QDPNVILLDT…YLESIPESES (95 aa)). Cys-177 acts as the Cysteine persulfide intermediate in catalysis.

The protein belongs to the TrhO family.

It catalyses the reaction uridine(34) in tRNA + AH2 + O2 = 5-hydroxyuridine(34) in tRNA + A + H2O. Functionally, catalyzes oxygen-dependent 5-hydroxyuridine (ho5U) modification at position 34 in tRNAs. This chain is tRNA uridine(34) hydroxylase, found in Legionella pneumophila (strain Corby).